We begin with the raw amino-acid sequence, 477 residues long: Ketoisovalerate oxidoreductase subunit VorA (477 aa).

Heterotrimer of the VorA, VorB and VorC subunits.

The catalysed reaction is 3-methyl-2-oxobutanoate + 2 oxidized [2Fe-2S]-[ferredoxin] + CoA = 2-methylpropanoyl-CoA + 2 reduced [2Fe-2S]-[ferredoxin] + CO2 + H(+). The protein is Ketoisovalerate oxidoreductase subunit VorA (vorA) of Methanothermobacter thermautotrophicus (strain ATCC 29096 / DSM 1053 / JCM 10044 / NBRC 100330 / Delta H) (Methanobacterium thermoautotrophicum).